The sequence spans 373 residues: Glutamate 5-kinase (373 aa).

ATP is bound at residue Lys15. Residues Ser55, Asp142, and Asn154 each contribute to the substrate site. ATP contacts are provided by residues 174 to 175 and 216 to 222; these read TD and TGGMVTK. The PUA domain maps to 281-359; sequence SGRVIVDDGA…GEIEAILGYK (79 aa).

The protein belongs to the glutamate 5-kinase family.

The protein resides in the cytoplasm. It carries out the reaction L-glutamate + ATP = L-glutamyl 5-phosphate + ADP. The protein operates within amino-acid biosynthesis; L-proline biosynthesis; L-glutamate 5-semialdehyde from L-glutamate: step 1/2. Catalyzes the transfer of a phosphate group to glutamate to form L-glutamate 5-phosphate. The protein is Glutamate 5-kinase of Geobacter metallireducens (strain ATCC 53774 / DSM 7210 / GS-15).